The primary structure comprises 570 residues: Capsid vertex component 2 (570 aa).

Residues 1–54 (MALSGHVLIDPARLPRDTGPELMWAPSLRNSLRVSPEALELAEREAERARSERW) form an interaction with major capsid protein/MCP region. The interval 102 to 123 (QVRSPSTGGRSAPAPPSPSPAQ) is disordered.

The protein belongs to the herpesviridae CVC2 protein family. As to quaternary structure, heterodimerizes with CVC1. Interacts with major capsid protein/MCP and triplex capsid protein 1/TRX1 at the pentamer vertices. Interacts with the large tegument protein/LTP.

It is found in the virion. It localises to the host nucleus. Functionally, capsid vertex-specific component that plays a role during viral DNA encapsidation, assuring correct genome cleavage and presumably stabilizing capsids that contain full-length viral genomes. Participates in the interaction between the capsid and the tegument through interaction with the large tegument protein/LTP. The sequence is that of Capsid vertex component 2 from Homo sapiens (Human).